A 561-amino-acid chain; its full sequence is DNA ligase B (561 aa).

Lys-125 functions as the N6-AMP-lysine intermediate in the catalytic mechanism.

It belongs to the NAD-dependent DNA ligase family. LigB subfamily.

The enzyme catalyses NAD(+) + (deoxyribonucleotide)n-3'-hydroxyl + 5'-phospho-(deoxyribonucleotide)m = (deoxyribonucleotide)n+m + AMP + beta-nicotinamide D-nucleotide.. Functionally, catalyzes the formation of phosphodiester linkages between 5'-phosphoryl and 3'-hydroxyl groups in double-stranded DNA using NAD as a coenzyme and as the energy source for the reaction. The chain is DNA ligase B from Salmonella newport (strain SL254).